The sequence spans 324 residues: Transmembrane protein 171 (324 aa).

Helical transmembrane passes span 22–42 (IFCF…LSIF), 57–77 (MVLK…VILA), 113–133 (LIFG…GIWV), and 160–180 (FLSL…FFVV). Positions 229–239 (PESSASAVAES) are enriched in low complexity. Disordered regions lie at residues 229–248 (PESS…LLPN) and 279–304 (YTIS…PPRY). Residues 279-291 (YTISGTNSSSEAS) are compositionally biased toward polar residues.

Its subcellular location is the membrane. In Homo sapiens (Human), this protein is Transmembrane protein 171 (TMEM171).